A 197-amino-acid polypeptide reads, in one-letter code: Large ribosomal subunit protein eL15 (197 aa).

Basic residues-rich tracts occupy residues 70 to 90 (PKGG…RMGK), 163 to 179 (RGKT…RKRG), and 187 to 197 (PSLRAHRRRGK). 2 disordered regions span residues 70-99 (PKGG…GKSK) and 163-197 (RGKT…RRGK).

Belongs to the eukaryotic ribosomal protein eL15 family.

In Methanopyrus kandleri (strain AV19 / DSM 6324 / JCM 9639 / NBRC 100938), this protein is Large ribosomal subunit protein eL15.